A 398-amino-acid chain; its full sequence is Lysophospholipid acyltransferase LPEAT1 (398 aa).

The segment at 1–24 (MESELKDLNSNSNPPSSKEDRPLL) is disordered. A Phosphoserine modification is found at Ser28. The helical transmembrane segment at 66–86 (LAVALVTLVPLRFLLSMSILL) threads the bilayer. Residues 158–185 (RDSDMDSNPKTTSTEINQKGEAATEEPE) are disordered. Residues 163–174 (DSNPKTTSTEIN) show a composition bias toward polar residues. Residues 194-199 (HVSYLD) carry the HXXXXD motif motif.

This sequence belongs to the 1-acyl-sn-glycerol-3-phosphate acyltransferase family.

It is found in the endoplasmic reticulum membrane. The enzyme catalyses a 1-acyl-sn-glycero-3-phosphoethanolamine + an acyl-CoA = a 1,2-diacyl-sn-glycero-3-phosphoethanolamine + CoA. It carries out the reaction a 1-acyl-sn-glycero-3-phosphate + an acyl-CoA = a 1,2-diacyl-sn-glycero-3-phosphate + CoA. It catalyses the reaction a 1-acyl-sn-glycero-3-phosphocholine + an acyl-CoA = a 1,2-diacyl-sn-glycero-3-phosphocholine + CoA. The catalysed reaction is a 1-acyl-sn-glycero-3-phospho-L-serine + an acyl-CoA = a 1,2-diacyl-sn-glycero-3-phospho-L-serine + CoA. It functions in the pathway lipid metabolism; phospholipid metabolism. Functionally, possesses acyl-CoA-dependent lysophospholipid acyltransferase activity with a subset of lysophospholipids as substrates. Exhibits strong acylation activity on lysophosphatidylethanolamine (LPE) and lysophosphatidate (LPA), and lower activity on lysophosphatidylcholine (LPC) and lysophosphatidylserine (LPS). Exhibits acylation activity on both LPE and LPC. Has a preference for 18:1-LPE over 16:0-LPE as acceptor. Palmitoyl-CoA (16:0-CoA) is a better acyl donor than oleoyl-CoA (18:1-CoA). Among several different acyl-CoA species the best acyl donor is palmitoyl-CoA (16:0-CoA). Activity is calcium-independent. Its activity is essential for maintaining adequate levels of phosphatidylethanolamine (PE), LPE and LPC in the cells, which is crucial for plant growth regulation. This is Lysophospholipid acyltransferase LPEAT1 from Arabidopsis thaliana (Mouse-ear cress).